Reading from the N-terminus, the 441-residue chain is Serine hydroxymethyltransferase (441 aa).

(6S)-5,6,7,8-tetrahydrofolate is bound by residues Leu119 and 123 to 125 (GHL). Lys228 carries the N6-(pyridoxal phosphate)lysine modification. Position 370–372 (370–372 (SPF)) interacts with (6S)-5,6,7,8-tetrahydrofolate.

Belongs to the SHMT family. As to quaternary structure, homodimer. The cofactor is pyridoxal 5'-phosphate.

The protein resides in the cytoplasm. The enzyme catalyses (6R)-5,10-methylene-5,6,7,8-tetrahydrofolate + glycine + H2O = (6S)-5,6,7,8-tetrahydrofolate + L-serine. It functions in the pathway one-carbon metabolism; tetrahydrofolate interconversion. The protein operates within amino-acid biosynthesis; glycine biosynthesis; glycine from L-serine: step 1/1. Functionally, catalyzes the reversible interconversion of serine and glycine with tetrahydrofolate (THF) serving as the one-carbon carrier. This reaction serves as the major source of one-carbon groups required for the biosynthesis of purines, thymidylate, methionine, and other important biomolecules. Also exhibits THF-independent aldolase activity toward beta-hydroxyamino acids, producing glycine and aldehydes, via a retro-aldol mechanism. This chain is Serine hydroxymethyltransferase, found in Chlorobium phaeovibrioides (strain DSM 265 / 1930) (Prosthecochloris vibrioformis (strain DSM 265)).